We begin with the raw amino-acid sequence, 217 residues long: Uridylate kinase (217 aa).

6 to 10 (KLSGR) is an ATP binding site. Residue glycine 38 coordinates UMP. ATP-binding residues include glycine 39 and arginine 43. UMP is bound by residues aspartate 60 and 107–113 (FQPGQST). The ATP site is built by asparagine 134, tyrosine 139, and aspartate 142.

Belongs to the UMP kinase family. Homohexamer.

Its subcellular location is the cytoplasm. The enzyme catalyses UMP + ATP = UDP + ADP. Its pathway is pyrimidine metabolism; CTP biosynthesis via de novo pathway; UDP from UMP (UMPK route): step 1/1. Its activity is regulated as follows. Inhibited by UTP. Functionally, catalyzes the reversible phosphorylation of UMP to UDP. This chain is Uridylate kinase, found in Pyrobaculum islandicum (strain DSM 4184 / JCM 9189 / GEO3).